We begin with the raw amino-acid sequence, 269 residues long: Small ribosomal subunit protein eS1 (269 aa).

Disordered stretches follow at residues 1–20 (MAVGKNKGVSKGGKKGSKKK) and 249–269 (AASGVVVDRPEGYEPPVQESV).

This sequence belongs to the eukaryotic ribosomal protein eS1 family. Component of the small ribosomal subunit. Mature ribosomes consist of a small (40S) and a large (60S) subunit. The 40S subunit contains about 33 different proteins and 1 molecule of RNA (18S). The 60S subunit contains about 49 different proteins and 3 molecules of RNA (28S, 5.8S and 5S).

The protein resides in the cytoplasm. The sequence is that of Small ribosomal subunit protein eS1 from Anopheles darlingi (Mosquito).